The chain runs to 454 residues: Anthocyanidin 3-O-galactosyltransferase 3GT6 (454 aa).

Positions 1–21 (MTNSSKGRHVAVLPFPFSTHA) are cleaved as a signal peptide. Positions 18 and 20 each coordinate an anthocyanidin. The active-site Proton acceptor is the His-20. Asp-117 (charge relay) is an active-site residue. His-148 contributes to the an anthocyanidin binding site. Residues Ala-331, Gln-333, His-348, Trp-351, Asn-352, Ser-353, and Glu-356 each coordinate UDP-alpha-D-glucose. Gly-371 contacts an anthocyanidin. Asp-372 contributes to the UDP-alpha-D-glucose binding site. Residue Asn-441 is glycosylated (N-linked (GlcNAc...) asparagine).

The protein belongs to the UDP-glycosyltransferase family. As to quaternary structure, monomer. As to expression, mostly expressed in leaves and flowers and, to a lower extent, in roots. In flowers, mainly observed in petals, stamens and scapes, and at lower levels in pistils and toruses.

It carries out the reaction cyanidin + UDP-alpha-D-galactose = cyanidin 3-O-beta-D-galactoside + UDP + H(+). The catalysed reaction is cyanidin + UDP-alpha-D-glucose = cyanidin 3-O-beta-D-glucoside + UDP + H(+). The enzyme catalyses delphinidin + UDP-alpha-D-glucose = delphinidin 3-O-beta-D-glucoside + UDP. It catalyses the reaction peonidin + UDP-alpha-D-glucose = peonidin 3-O-beta-D-glucoside + UDP. It carries out the reaction pelargonidin + UDP-alpha-D-glucose = pelargonidin 3-O-beta-D-glucoside + UDP. The catalysed reaction is delphinidin + UDP-alpha-D-galactose = delphinidin 3-O-beta-D-galactoside + UDP + H(+). The enzyme catalyses pelargonidin + UDP-alpha-D-galactose = pelargonidin 3-O-beta-D-galactoside betaine + UDP. It catalyses the reaction peonidin + UDP-alpha-D-galactose = peonidin 3-O-beta-D-galactoside + UDP. It carries out the reaction petunidin + UDP-alpha-D-galactose = petunidin 3-O-beta-D-galactoside + UDP. The catalysed reaction is petunidin + UDP-alpha-D-glucose = petunidin 3-O-beta-D-glucoside + UDP. The enzyme catalyses an anthocyanidin + UDP-alpha-D-glucose + H(+) = an anthocyanidin 3-O-beta-D-glucoside + UDP. It catalyses the reaction an anthocyanidin + UDP-alpha-D-galactose = an anthocyanidin 3-O-beta-D-galactoside + UDP. It functions in the pathway pigment biosynthesis; anthocyanin biosynthesis. Its function is as follows. Flavonoid 3-O-glycosyltransferase involved in the biosynthesis of anthocyanins conferring flower red/pink colors, mainly anthocyanidin 3-O-glycosides. Catalyzes the addition of UDP-sugar to the 3-OH of anthocyanidin, with a preference for UDP-galactose (UDP-Gal) as sugar donor and cyanidin as substrate; able to use delphinidin, pelargonidin, peonidin and petunidin as substrates in the presence of UDP-Gal, but barely active on malvidin. Can also use UDP-glucose (UDP-Glu) as sugar donor with cyanidin, delphinidin, pelargonidin, peonidin and petunidin as substrates, but not active on malvidin. The sequence is that of Anthocyanidin 3-O-galactosyltransferase 3GT6 from Rhododendron delavayi (Rhododendron).